A 67-amino-acid chain; its full sequence is uncharacterized protein (67 aa).

This is an uncharacterized protein from Rickettsia prowazekii (strain Madrid E).